A 621-amino-acid chain; its full sequence is Chaperone protein HtpG (621 aa).

Residues 1-341 form an a; substrate-binding region; the sequence is MSNQEYTFQT…SEDLPLNVSR (341 aa). The b stretch occupies residues 342-547; the sequence is EILQQNKILA…GDEQNAMMAN (206 aa). Residues 548–621 form a c region; that stretch reads FMRQMGQSVP…RLNSVLLKAL (74 aa).

The protein belongs to the heat shock protein 90 family. In terms of assembly, homodimer.

It is found in the cytoplasm. Molecular chaperone. Has ATPase activity. This chain is Chaperone protein HtpG, found in Helicobacter pylori (strain HPAG1).